Consider the following 238-residue polypeptide: Zinc import ATP-binding protein ZnuC (238 aa).

The 216-residue stretch at 5–220 (IQLNNISVNF…SEFIAIFGNI (216 aa)) folds into the ABC transporter domain. 37 to 44 (GPNGAGKS) provides a ligand contact to ATP.

This sequence belongs to the ABC transporter superfamily. Zinc importer (TC 3.A.1.15.5) family. As to quaternary structure, the complex is composed of two ATP-binding proteins (ZnuC), two transmembrane proteins (ZnuB) and a solute-binding protein (ZnuA).

It localises to the cell membrane. The enzyme catalyses Zn(2+)(out) + ATP(in) + H2O(in) = Zn(2+)(in) + ADP(in) + phosphate(in) + H(+)(in). Part of the ABC transporter complex ZnuABC involved in zinc import. Responsible for energy coupling to the transport system. In Buchnera aphidicola subsp. Baizongia pistaciae (strain Bp), this protein is Zinc import ATP-binding protein ZnuC.